A 540-amino-acid polypeptide reads, in one-letter code: MVLRLPDPSHGGGAPPHDHTEDEWFKERYGGGGGGGDAPRSSRAVNPVPPYGRRSALAPRRKEDFGDGGAFPEVHVAQYPLDMGRRGGDGDGEQRGSSGGVLSLTVDGSGGRVEFDAVVRQGENAGKTVYSSPGDVLPKINAAAADADDDEQAAVEETTARTSAALRAIVEKRLSAVQPSNTLASNHDPEFIKYTPARQTSAFNSGAAERIIRMGETQQDPLEPPKFKHKRVPAPAGSPPVPVLRSPPRPPSQKDHDDWKVPPSISSWKNPKGYSIPLDKRAALDGRGLHDVQVSDAFAALAEALYAAEQKAREAVETRAKVHTEMKMREKEKAEQHLLQLATKARAEMLGAAPPAPSERSKAAAERDAIREERRRERRLEARAAAAAASKKSAATRDRDRDVSERIALGMANTGGGGGEVTYDQRLFNQEKGMGSGFAGDDQYNVYSGRLFAAQPALSTLYKPSKHGEEDPDAYGDADEHLGKIAKTRRFVPDKAFTGAPASVAAGKRERPVEFDGPEMEEDPFHLDQFLTQMKKGKHQ.

4 disordered regions span residues Met-1 to Val-106, Gly-215 to Gly-273, Gly-351 to Asp-402, and Ala-502 to His-526. Basic and acidic residues-rich tracts occupy residues Pro-16 to Tyr-29 and Met-83 to Gln-94. An SNW region spans residues Pro-189 to Ala-353. Pro residues predominate over residues Ala-236 to Pro-251. Positions Glu-359–Ala-382 are enriched in basic and acidic residues. The segment covering Arg-383–Ser-393 has biased composition (low complexity).

This sequence belongs to the SNW family.

The protein localises to the nucleus. The chain is SNW/SKI-interacting protein B from Oryza sativa subsp. japonica (Rice).